Here is a 711-residue protein sequence, read N- to C-terminus: Polyribonucleotide nucleotidyltransferase (711 aa).

Mg(2+)-binding residues include aspartate 490 and aspartate 496. Residues 557–619 form the KH domain; it reads PRIETMTIPK…KCIDDAMRII (63 aa). In terms of domain architecture, S1 motif spans 629-699; sequence GEVYVGKVRS…KTGKFKLSHK (71 aa).

This sequence belongs to the polyribonucleotide nucleotidyltransferase family. Mg(2+) serves as cofactor.

The protein resides in the cytoplasm. It catalyses the reaction RNA(n+1) + phosphate = RNA(n) + a ribonucleoside 5'-diphosphate. Its function is as follows. Involved in mRNA degradation. Catalyzes the phosphorolysis of single-stranded polyribonucleotides processively in the 3'- to 5'-direction. The chain is Polyribonucleotide nucleotidyltransferase from Phocaeicola vulgatus (strain ATCC 8482 / DSM 1447 / JCM 5826 / CCUG 4940 / NBRC 14291 / NCTC 11154) (Bacteroides vulgatus).